The sequence spans 607 residues: Dolichyl-diphosphooligosaccharide--protein glycosyltransferase subunit 1 (607 aa).

Residues 1-23 form the signal peptide; it reads MEAPAAGLFLLLLLGTWAPAPGS. At 24 to 438 the chain is on the lumenal side; that stretch reads ASSEAPPLIN…TFNKVLMLQE (415 aa). K187 is subject to N6-acetyllysine. The N-linked (GlcNAc...) asparagine glycan is linked to N299. Residues 439-457 form a helical membrane-spanning segment; that stretch reads PLLVVAAFYILFFTVIIYV. At 458–607 the chain is on the cytoplasmic side; the sequence is RLDFSITKDP…TKIDHILDAL (150 aa). K538 bears the N6-acetyllysine; alternate mark. Residue K538 forms a Glycyl lysine isopeptide (Lys-Gly) (interchain with G-Cter in SUMO2); alternate linkage.

It belongs to the OST1 family. Component of the oligosaccharyltransferase (OST) complex. OST exists in two different complex forms which contain common core subunits RPN1, RPN2, OST48, OST4, DAD1 and TMEM258, either STT3A or STT3B as catalytic subunits, and form-specific accessory subunits. STT3A complex assembly occurs through the formation of 3 subcomplexes. Subcomplex 1 contains RPN1 and TMEM258, subcomplex 2 contains the STT3A-specific subunits STT3A, DC2/OSTC, and KCP2 as well as the core subunit OST4, and subcomplex 3 contains RPN2, DAD1, and OST48. The STT3A complex can form stable complexes with the Sec61 complex or with both the Sec61 and TRAP complexes. Interacts with TMEM35A/NACHO. In terms of processing, ubiquitinated by the ECS(ASB11) complex. Ubiquitinated by RNF128, leading to degradation in a proteasome/lysosome-dependent manner. Post-translationally, ufmylated by UFL1 in response to endoplasmic reticulum stress, promoting reticulophagy of endoplasmic reticulum sheets. Expressed in all tissues tested.

The protein localises to the endoplasmic reticulum membrane. Its subcellular location is the melanosome. The protein operates within protein modification; protein glycosylation. Its function is as follows. Subunit of the oligosaccharyl transferase (OST) complex that catalyzes the initial transfer of a defined glycan (Glc(3)Man(9)GlcNAc(2) in eukaryotes) from the lipid carrier dolichol-pyrophosphate to an asparagine residue within an Asn-X-Ser/Thr consensus motif in nascent polypeptide chains, the first step in protein N-glycosylation. N-glycosylation occurs cotranslationally and the complex associates with the Sec61 complex at the channel-forming translocon complex that mediates protein translocation across the endoplasmic reticulum (ER). All subunits are required for a maximal enzyme activity. The sequence is that of Dolichyl-diphosphooligosaccharide--protein glycosyltransferase subunit 1 from Homo sapiens (Human).